Consider the following 896-residue polypeptide: Alanine--tRNA ligase (896 aa).

Positions 581, 585, 684, and 688 each coordinate Zn(2+).

This sequence belongs to the class-II aminoacyl-tRNA synthetase family. It depends on Zn(2+) as a cofactor.

The protein localises to the cytoplasm. The enzyme catalyses tRNA(Ala) + L-alanine + ATP = L-alanyl-tRNA(Ala) + AMP + diphosphate. In terms of biological role, catalyzes the attachment of alanine to tRNA(Ala) in a two-step reaction: alanine is first activated by ATP to form Ala-AMP and then transferred to the acceptor end of tRNA(Ala). Also edits incorrectly charged Ser-tRNA(Ala) and Gly-tRNA(Ala) via its editing domain. In Renibacterium salmoninarum (strain ATCC 33209 / DSM 20767 / JCM 11484 / NBRC 15589 / NCIMB 2235), this protein is Alanine--tRNA ligase.